The primary structure comprises 398 residues: Acetate kinase (398 aa).

Residue N10 coordinates Mg(2+). K17 provides a ligand contact to ATP. R91 contacts substrate. The active-site Proton donor/acceptor is D148. ATP contacts are provided by residues 208–212, 283–285, and 331–335; these read HLGNG, DCR, and GIGEN. Position 385 (E385) interacts with Mg(2+).

This sequence belongs to the acetokinase family. As to quaternary structure, homodimer. The cofactor is Mg(2+). Requires Mn(2+) as cofactor.

The protein localises to the cytoplasm. The enzyme catalyses acetate + ATP = acetyl phosphate + ADP. The protein operates within metabolic intermediate biosynthesis; acetyl-CoA biosynthesis; acetyl-CoA from acetate: step 1/2. In terms of biological role, catalyzes the formation of acetyl phosphate from acetate and ATP. Can also catalyze the reverse reaction. This chain is Acetate kinase, found in Shewanella loihica (strain ATCC BAA-1088 / PV-4).